The following is a 1163-amino-acid chain: Spike glycoprotein (1163 aa).

The signal sequence occupies residues 1–18 (MLERSLLLATLLSALCSA). Residues 19–1096 (NLFGNNSYVY…LKTYIKWPWY (1078 aa)) are Extracellular-facing. Asn-23, Asn-51, Asn-74, Asn-102, Asn-139, Asn-145, Asn-164, Asn-179, Asn-213, Asn-238, Asn-248, Asn-265, Asn-272, Asn-277, Asn-307, Asn-426, Asn-448, Asn-514, Asn-531, Asn-543, Asn-580, Asn-592, Asn-670, and Asn-677 each carry an N-linked (GlcNAc...) asparagine; by host glycan. A heptad repeat 1 (HR1) region spans residues 770-875 (IPFATQLQAR…QVDRIITGRL (106 aa)). Positions 823 to 867 (QDVVNKQSSILTETMASLNKNFGAISSVLQDIYQQLDSIQADAQV) form a coiled coil. N-linked (GlcNAc...) asparagine; by host glycosylation is found at Asn-948, Asn-961, Asn-980, Asn-1015, Asn-1039, Asn-1052, and Asn-1075. Positions 1025–1106 (NDDFDFDDEL…VWLAIAFLTI (82 aa)) are heptad repeat 2 (HR2). Positions 1056-1084 (PILDIGSEIDRIQGVIQGLNDSLIDLETL) form a coiled coil. The chain crosses the membrane as a helical span at residues 1097–1117 (VWLAIAFLTIIFILVLCWIFF). The Cytoplasmic segment spans residues 1118 to 1163 (MTGCCGCCCGCFGIIPLMSKCGKKSSYYTTFDNDVVYEQYRPKKSV). The short motif at 1160-1163 (KKSV) is the Di-lysine motif element.

This sequence belongs to the gammacoronaviruses spike protein family. As to quaternary structure, homotrimer; each monomer consists of a S1 and a S2 subunit. The resulting peplomers protrude from the virus surface as spikes. In terms of processing, specific enzymatic cleavages in vivo yield mature proteins. The precursor is processed into S1 and S2 by host cell furin or furin-like protease to yield the mature S1 and S2 proteins. The cleavage site between S1 and S2 requires the optimal sequence [KR]-X-[KR]-R. Additionally, a second cleavage leads to the release of a fusion peptide after viral attachment to host cell receptor.

It localises to the virion membrane. It is found in the host endoplasmic reticulum-Golgi intermediate compartment membrane. Attaches the virion to the host cell membrane by interacting with sialic acids, initiating the infection. Functionally, mediates fusion of the virion and cellular membranes by acting as a class I viral fusion protein. Under the current model, the protein has at least 3 conformational states: pre-fusion native state, pre-hairpin intermediate state, and post-fusion hairpin state. During viral and target cell membrane fusion, the coiled coil regions (heptad repeats) assume a trimer-of-hairpins structure, positioning the fusion peptide in close proximity to the C-terminal region of the ectodomain. The formation of this structure appears to drive apposition and subsequent fusion of viral and target cell membranes. In terms of biological role, acts as a viral fusion peptide after S2 cleavage occurring upon virus endocytosis. This is Spike glycoprotein from Gallus gallus (Chicken).